A 92-amino-acid chain; its full sequence is Protease inhibitors (92 aa).

Residues 1–19 (MKFALALCAAVLLVVLVQA) form the signal peptide. 2 consecutive Pacifastin domains span residues 20-54 (EEKC…CQPA) and 57-92 (EISC…CPNQ). 6 cysteine pairs are disulfide-bonded: Cys-23/Cys-38, Cys-33/Cys-51, Cys-36/Cys-46, Cys-60/Cys-75, Cys-70/Cys-89, and Cys-73/Cys-84. A glycan (O-linked (Fuc) threonine) is linked at Thr-65.

Belongs to the protease inhibitor I19 family. In terms of tissue distribution, brain and fat body.

Its subcellular location is the secreted. In terms of biological role, both LCMI I and II are inhibitors of chymotrypsin and elastase (in vitro). They both inhibit the prophenol oxidase activation cascade. The sequence is that of Protease inhibitors from Locusta migratoria (Migratory locust).